Here is a 275-residue protein sequence, read N- to C-terminus: Rhamnulose-1-phosphate aldolase (275 aa).

Residue Glu-117 is part of the active site. Residues His-141, His-143, and His-212 each coordinate Zn(2+).

It belongs to the aldolase class II family. RhaD subfamily. Homotetramer. Zn(2+) serves as cofactor.

The protein localises to the cytoplasm. The catalysed reaction is L-rhamnulose 1-phosphate = (S)-lactaldehyde + dihydroxyacetone phosphate. It functions in the pathway carbohydrate degradation; L-rhamnose degradation; glycerone phosphate from L-rhamnose: step 3/3. Functionally, catalyzes the reversible cleavage of L-rhamnulose-1-phosphate to dihydroxyacetone phosphate (DHAP) and L-lactaldehyde. The sequence is that of Rhamnulose-1-phosphate aldolase from Salmonella dublin (strain CT_02021853).